The following is a 193-amino-acid chain: Large ribosomal subunit protein uL5 (193 aa).

The protein belongs to the universal ribosomal protein uL5 family. Part of the 50S ribosomal subunit; part of the 5S rRNA/L5/L18/L25 subcomplex. Contacts the 5S rRNA and the P site tRNA. Forms a bridge to the 30S subunit in the 70S ribosome.

Functionally, this is one of the proteins that bind and probably mediate the attachment of the 5S RNA into the large ribosomal subunit, where it forms part of the central protuberance. In the 70S ribosome it contacts protein S13 of the 30S subunit (bridge B1b), connecting the 2 subunits; this bridge is implicated in subunit movement. Contacts the P site tRNA; the 5S rRNA and some of its associated proteins might help stabilize positioning of ribosome-bound tRNAs. The polypeptide is Large ribosomal subunit protein uL5 (Corynebacterium urealyticum (strain ATCC 43042 / DSM 7109)).